The sequence spans 398 residues: MKRLTILGSTGSVGKSTLTVVRNNPDKFKVTALAAGKNIQVMAEQCLEFRPQYAAMADEVSAKELRQLLIEQGCKTEVFFGEQAACDLAALNDVDQVMSGIVGVAGLLPTLAAIRAGKQILLANKESLITSGRFFMDAVAKHNAQLLPIDSEHNAIFQSLPEVIQRNLGRGDLKQYGIANIILTGSGGPFRHTPLEQLAFVTPDQACAHPNWSMGRKISVDSATMMNKGLEYIEACCLFNASAAEMEVVVHPQSVIHSMVRYQDGSVIAQLGTPDMCTPIAYAMAYPNRIASGVEPLDFYSLGTLTFSKPDYERYPCLKLAIEACHAGQAATTVLNAANEEIVKIFLQNGISFTDIAIINRQVVEKLNLSEPQSIEEVLQIDNLARDLAIKTIRSFIR.

NADPH contacts are provided by threonine 10, glycine 11, serine 12, valine 13, glycine 36, lysine 37, asparagine 38, and asparagine 124. Lysine 125 provides a ligand contact to 1-deoxy-D-xylulose 5-phosphate. Glutamate 126 contacts NADPH. A Mn(2+)-binding site is contributed by aspartate 150. Positions 151, 152, 186, and 209 each coordinate 1-deoxy-D-xylulose 5-phosphate. Glutamate 152 contributes to the Mn(2+) binding site. Position 215 (glycine 215) interacts with NADPH. 4 residues coordinate 1-deoxy-D-xylulose 5-phosphate: serine 222, asparagine 227, lysine 228, and glutamate 231. Glutamate 231 serves as a coordination point for Mn(2+).

Belongs to the DXR family. In terms of assembly, homodimer. Requires Mg(2+) as cofactor. It depends on Mn(2+) as a cofactor.

It catalyses the reaction 2-C-methyl-D-erythritol 4-phosphate + NADP(+) = 1-deoxy-D-xylulose 5-phosphate + NADPH + H(+). The protein operates within isoprenoid biosynthesis; isopentenyl diphosphate biosynthesis via DXP pathway; isopentenyl diphosphate from 1-deoxy-D-xylulose 5-phosphate: step 1/6. Functionally, catalyzes the NADPH-dependent rearrangement and reduction of 1-deoxy-D-xylulose-5-phosphate (DXP) to 2-C-methyl-D-erythritol 4-phosphate (MEP). In Photorhabdus laumondii subsp. laumondii (strain DSM 15139 / CIP 105565 / TT01) (Photorhabdus luminescens subsp. laumondii), this protein is 1-deoxy-D-xylulose 5-phosphate reductoisomerase.